The chain runs to 705 residues: Phosphoribosylformylglycinamidine synthase subunit PurL (705 aa).

His-32 is a catalytic residue. Residue Tyr-35 coordinates ATP. Glu-76 provides a ligand contact to Mg(2+). Substrate is bound by residues 77-80 and Arg-99; that span reads SHNH. His-78 functions as the Proton acceptor in the catalytic mechanism. Asp-100 contacts Mg(2+). Gln-224 serves as a coordination point for substrate. Asp-252 is a binding site for Mg(2+). 296–298 lines the substrate pocket; the sequence is ESQ. ATP-binding residues include Asp-471 and Gly-508. Mg(2+) is bound at residue Asn-509. A substrate-binding site is contributed by Ser-511.

Belongs to the FGAMS family. As to quaternary structure, monomer. Part of the FGAM synthase complex composed of 1 PurL, 1 PurQ and 2 PurS subunits.

It is found in the cytoplasm. The catalysed reaction is N(2)-formyl-N(1)-(5-phospho-beta-D-ribosyl)glycinamide + L-glutamine + ATP + H2O = 2-formamido-N(1)-(5-O-phospho-beta-D-ribosyl)acetamidine + L-glutamate + ADP + phosphate + H(+). It participates in purine metabolism; IMP biosynthesis via de novo pathway; 5-amino-1-(5-phospho-D-ribosyl)imidazole from N(2)-formyl-N(1)-(5-phospho-D-ribosyl)glycinamide: step 1/2. Its function is as follows. Part of the phosphoribosylformylglycinamidine synthase complex involved in the purines biosynthetic pathway. Catalyzes the ATP-dependent conversion of formylglycinamide ribonucleotide (FGAR) and glutamine to yield formylglycinamidine ribonucleotide (FGAM) and glutamate. The FGAM synthase complex is composed of three subunits. PurQ produces an ammonia molecule by converting glutamine to glutamate. PurL transfers the ammonia molecule to FGAR to form FGAM in an ATP-dependent manner. PurS interacts with PurQ and PurL and is thought to assist in the transfer of the ammonia molecule from PurQ to PurL. In Pyrococcus horikoshii (strain ATCC 700860 / DSM 12428 / JCM 9974 / NBRC 100139 / OT-3), this protein is Phosphoribosylformylglycinamidine synthase subunit PurL.